A 345-amino-acid chain; its full sequence is UDP-N-acetylenolpyruvoylglucosamine reductase (345 aa).

The region spanning 25-193 (LPAHCTDFVS…VGVTFLLPKA (169 aa)) is the FAD-binding PCMH-type domain. The active site involves Arg169. Catalysis depends on Ser237, which acts as the Proton donor. Glu333 is a catalytic residue.

Belongs to the MurB family. Requires FAD as cofactor.

Its subcellular location is the cytoplasm. It catalyses the reaction UDP-N-acetyl-alpha-D-muramate + NADP(+) = UDP-N-acetyl-3-O-(1-carboxyvinyl)-alpha-D-glucosamine + NADPH + H(+). It functions in the pathway cell wall biogenesis; peptidoglycan biosynthesis. Its function is as follows. Cell wall formation. The sequence is that of UDP-N-acetylenolpyruvoylglucosamine reductase from Pseudoalteromonas atlantica (strain T6c / ATCC BAA-1087).